The sequence spans 133 residues: Putative N-acetylgalactosamine permease IIC component 2 (133 aa).

Residues 1-2 (ME) are Cytoplasmic-facing. In terms of domain architecture, PTS EIIC type-4 spans 1 to 133 (MEISLLQAFA…CDLATNPRRI (133 aa)). The chain crosses the membrane as a helical span at residues 3–23 (ISLLQAFALGIIAFIAGLDMF). The Periplasmic segment spans residues 24 to 32 (NGLTHMHRP). Residues 33-53 (VVLGPLVGLVLGDLHTGILTG) traverse the membrane as a helical segment. At 54-65 (GTLELVWMGLAP) the chain is on the cytoplasmic side. The helical transmembrane segment at 66-86 (LAGAQPPNVIIGTIVGTAFAI) threads the bilayer. Over 87-93 (TTGVKPD) the chain is Periplasmic. The chain crosses the membrane as a helical span at residues 94–114 (VAVGVAVPFAVAVQMGITFLF). Topologically, residues 115-133 (SVMSGVMSRCDLATNPRRI) are cytoplasmic.

The protein localises to the cell inner membrane. The phosphoenolpyruvate-dependent sugar phosphotransferase system (PTS), a major carbohydrate active -transport system, catalyzes the phosphorylation of incoming sugar substrates concomitant with their translocation across the cell membrane. This system is involved in N-acetylgalactosamine transport. This is Putative N-acetylgalactosamine permease IIC component 2 (agaW) from Escherichia coli (strain K12).